Consider the following 195-residue polypeptide: Imidazoleglycerol-phosphate dehydratase (195 aa).

Belongs to the imidazoleglycerol-phosphate dehydratase family.

The protein localises to the cytoplasm. The enzyme catalyses D-erythro-1-(imidazol-4-yl)glycerol 3-phosphate = 3-(imidazol-4-yl)-2-oxopropyl phosphate + H2O. The protein operates within amino-acid biosynthesis; L-histidine biosynthesis; L-histidine from 5-phospho-alpha-D-ribose 1-diphosphate: step 6/9. The sequence is that of Imidazoleglycerol-phosphate dehydratase from Cereibacter sphaeroides (strain ATCC 17029 / ATH 2.4.9) (Rhodobacter sphaeroides).